A 201-amino-acid chain; its full sequence is MKKIGLFGGTFDPIHNGHFHIARAFADEIGLDAVVFLPAGGPYHKDAASASAADRLAMVELATAEDARFAVSDCDIVRESATYTFDTVQIFRRQFPSAQLWWLMGSDSLLKLHTWKKWQLLVRETNIAVAMRQGDSLHQTPRELHAWLGNALQDGSVRILSAPMHNVSSTEIRRNLSAAGVSDGIPPAAARYIRKHGLYEK.

Belongs to the NadD family.

The enzyme catalyses nicotinate beta-D-ribonucleotide + ATP + H(+) = deamido-NAD(+) + diphosphate. It functions in the pathway cofactor biosynthesis; NAD(+) biosynthesis; deamido-NAD(+) from nicotinate D-ribonucleotide: step 1/1. Catalyzes the reversible adenylation of nicotinate mononucleotide (NaMN) to nicotinic acid adenine dinucleotide (NaAD). The polypeptide is Probable nicotinate-nucleotide adenylyltransferase (Neisseria gonorrhoeae (strain ATCC 700825 / FA 1090)).